We begin with the raw amino-acid sequence, 194 residues long: tRNA (pseudouridine(54)-N(1))-methyltransferase (194 aa).

Leu125 provides a ligand contact to S-adenosyl-L-methionine.

Belongs to the methyltransferase superfamily. TrmY family. As to quaternary structure, homodimer.

The protein resides in the cytoplasm. It catalyses the reaction pseudouridine(54) in tRNA + S-adenosyl-L-methionine = N(1)-methylpseudouridine(54) in tRNA + S-adenosyl-L-homocysteine + H(+). Functionally, specifically catalyzes the N1-methylation of pseudouridine at position 54 (Psi54) in tRNAs. The sequence is that of tRNA (pseudouridine(54)-N(1))-methyltransferase from Methanospirillum hungatei JF-1 (strain ATCC 27890 / DSM 864 / NBRC 100397 / JF-1).